The following is a 426-amino-acid chain: High affinity 3',5'-cyclic-AMP phosphodiesterase 7A (426 aa).

One can recognise a PDEase domain in the interval 80–402; the sequence is LDEDYNGQAK…ASWKGLQRQQ (323 aa). The active-site Proton donor is H156. The a divalent metal cation site is built by H160, H196, D197, and D306.

Belongs to the cyclic nucleotide phosphodiesterase family. PDE7 subfamily. Interacts with CBFA2T3. A divalent metal cation is required as a cofactor.

It localises to the cytoplasm. The protein resides in the cytosol. It catalyses the reaction 3',5'-cyclic AMP + H2O = AMP + H(+). It participates in purine metabolism; 3',5'-cyclic AMP degradation; AMP from 3',5'-cyclic AMP: step 1/1. Its function is as follows. Hydrolyzes the second messenger cAMP, which is a key regulator of many important physiological processes. May have a role in muscle signal transduction. The polypeptide is High affinity 3',5'-cyclic-AMP phosphodiesterase 7A (Pde7a) (Rattus norvegicus (Rat)).